The following is a 177-amino-acid chain: Bifunctional protein PyrR (177 aa).

Positions 99-111 (VILIDDVLYTGRT) match the PRPP-binding motif.

This sequence belongs to the purine/pyrimidine phosphoribosyltransferase family. PyrR subfamily. In terms of assembly, homodimer and homohexamer; in equilibrium.

It catalyses the reaction UMP + diphosphate = 5-phospho-alpha-D-ribose 1-diphosphate + uracil. In terms of biological role, regulates transcriptional attenuation of the pyrimidine nucleotide (pyr) operon by binding in a uridine-dependent manner to specific sites on pyr mRNA. This disrupts an antiterminator hairpin in the RNA and favors formation of a downstream transcription terminator, leading to a reduced expression of downstream genes. Also displays a weak uracil phosphoribosyltransferase activity which is not physiologically significant. The chain is Bifunctional protein PyrR from Pediococcus pentosaceus (strain ATCC 25745 / CCUG 21536 / LMG 10740 / 183-1w).